The sequence spans 100 residues: UPF0213 protein YhbQ (100 aa).

One can recognise a GIY-YIG domain in the interval 2–77; the sequence is TPWFLYLIRT…KQLTKRQKER (76 aa).

It belongs to the UPF0213 family.

This is UPF0213 protein YhbQ from Escherichia coli O7:K1 (strain IAI39 / ExPEC).